The sequence spans 76 residues: Dolichyl-diphosphooligosaccharide--protein glycosyltransferase subunit OST5 (76 aa).

2 consecutive transmembrane segments (helical) span residues 14–34 (FYPV…ATFI) and 54–74 (ALIA…AGGI).

It belongs to the OST5 family. As to quaternary structure, component of the oligosaccharyltransferase (OST) complex.

Its subcellular location is the membrane. In terms of biological role, subunit of the oligosaccharyl transferase (OST) complex that catalyzes the initial transfer of a defined glycan (Glc(3)Man(9)GlcNAc(2) in eukaryotes) from the lipid carrier dolichol-pyrophosphate to an asparagine residue within an Asn-X-Ser/Thr consensus motif in nascent polypeptide chains, the first step in protein N-glycosylation. N-glycosylation occurs cotranslationally and the complex associates with the Sec61 complex at the channel-forming translocon complex that mediates protein translocation across the endoplasmic reticulum (ER). All subunits are required for a maximal enzyme activity. This chain is Dolichyl-diphosphooligosaccharide--protein glycosyltransferase subunit OST5, found in Dictyostelium discoideum (Social amoeba).